Consider the following 223-residue polypeptide: Protein UGX2 (223 aa).

Positions 78 to 95 are enriched in basic residues; it reads SNKRAKMKSKTKLTRTAK. Residues 78 to 117 are disordered; the sequence is SNKRAKMKSKTKLTRTAKQRRESPVCERDESDEDNDSDHY. The segment covering 96-105 has biased composition (basic and acidic residues); sequence QRRESPVCER.

This is Protein UGX2 (UGX2) from Saccharomyces cerevisiae (strain ATCC 204508 / S288c) (Baker's yeast).